A 674-amino-acid chain; its full sequence is Fidgetin-like protein 1 (674 aa).

The segment at 157–179 (SQESDSLPNSAHDRDRTQDFPES) is disordered. Over residues 167-179 (AHDRDRTQDFPES) the composition is skewed to basic and acidic residues. A Glycyl lysine isopeptide (Lys-Gly) (interchain with G-Cter in SUMO2) cross-link involves residue Lys-225. Residue Ser-259 is modified to Phosphoserine. Residues 295-344 (FKTAKEQLWVDQQKKYHQPQRASGSSYGGVKKSLGASRSRGILGKFVPPI) are necessary and sufficient for interaction with RAD51. At Lys-339 the chain carries N6-acetyllysine. ATP is bound by residues Ala-404 and 444–449 (GTGKTL).

This sequence belongs to the AAA ATPase family. Hexamer. Interacts (via N-terminal one-half region) with RAD51; the interaction is direct. Interacts (via N-terminal one-half region) with SPIDR (via the C-terminal region); the interaction is direct. Interacts with FIRRM; may regulate homologous recombination. Mg(2+) serves as cofactor.

It localises to the nucleus. It is found in the cytoplasm. The protein localises to the perinuclear region. It catalyses the reaction ATP + H2O = ADP + phosphate + H(+). In terms of biological role, involved in DNA double-strand break (DBS) repair via homologous recombination (HR). Recruited at DSB sites independently of BRCA2, RAD51 and RAD51 paralogs in a H2AX-dependent manner. May regulate osteoblast proliferation and differentiation. May play a role in the control of male meiosis dynamic. The polypeptide is Fidgetin-like protein 1 (FIGNL1) (Homo sapiens (Human)).